Here is a 793-residue protein sequence, read N- to C-terminus: Protein zer-1 homolog (793 aa).

3 LRR repeats span residues 84–108 (RTSLKIVNLRNSTLSSIGLETLMRH), 187–210 (LHDLGHLDLTSCVLANFSLEALGS), and 269–294 (LRHLTHLDISGTNLAGNGVATKESTT).

This sequence belongs to the zyg-11 family.

Its function is as follows. Serves as substrate adapter subunit in an E3 ubiquitin ligase complex CG12084-cul-2-elongin BC. Targets substrates bearing N-terminal glycine degrons for proteasomal degradation. The sequence is that of Protein zer-1 homolog from Drosophila melanogaster (Fruit fly).